The following is a 940-amino-acid chain: Lysine-specific demethylase 7A (940 aa).

Residues 37–88 form a PHD-type zinc finger; the sequence is PVYCVCRQPYDVNRFMIECDVCKDWFHGSCVGVEEHHAVDIDLYHCPDCAAL. The segment at 97–114 is linker; the sequence is RRNWHRHDYTEVDDGSKP. Residues 230 to 386 enclose the JmjC domain; sequence FSDTKMSELV…MQLRCYEMEK (157 aa). Thr279 is a binding site for substrate. 2 residues coordinate Fe cation: His282 and Asp284. Lys299 contributes to the substrate binding site. A Fe cation-binding site is contributed by His354. 5 disordered regions span residues 483 to 509, 599 to 670, 710 to 729, 818 to 854, and 876 to 920; these read VKSQGIPSVCPVSRPSNEASPPYHSRR, LYTA…PDCT, SQKPSRQEIPVKRECPTSTS, NAQDLSRSQKHIKKESSSEINQKAQSRHCVDSNSSSI, and SPER…MATA. At Ser604 the chain carries Phosphoserine. A compositionally biased stretch (polar residues) spans 613 to 623; the sequence is TQNANMKTEQS. The span at 714-724 shows a compositional bias: basic and acidic residues; sequence SRQEIPVKREC.

The protein belongs to the JHDM1 histone demethylase family. JHDM1D subfamily. The cofactor is Fe(2+).

It is found in the nucleus. It catalyses the reaction N(6),N(6)-dimethyl-L-lysyl(9)-[histone H3] + 2 2-oxoglutarate + 2 O2 = L-lysyl(9)-[histone H3] + 2 formaldehyde + 2 succinate + 2 CO2. The enzyme catalyses N(6),N(6)-dimethyl-L-lysyl(27)-[histone H3] + 2 2-oxoglutarate + 2 O2 = L-lysyl(27)-[histone H3] + 2 formaldehyde + 2 succinate + 2 CO2. The catalysed reaction is N(6),N(6)-dimethyl-L-lysyl(36)-[histone H3] + 2-oxoglutarate + O2 = N(6)-methyl-L-lysyl(36)-[histone H3] + formaldehyde + succinate + CO2. It carries out the reaction N(6)-methyl-L-lysyl(20)-[histone H4] + 2-oxoglutarate + O2 = L-lysyl(20)-[histone H4] + formaldehyde + succinate + CO2. Functionally, histone demethylase required for brain development. Specifically demethylates dimethylated 'Lys-9', 'Lys-27' and 'Lys-36' (H3K9me2, H3K27me2, H3K36me2, respectively) of histone H3 and monomethylated histone H4 'Lys-20' residue (H4K20Me1), thereby playing a central role in histone code. Specifically binds trimethylated 'Lys-4' of histone H3 (H3K4me3), affecting histone demethylase specificity: in presence of H3K4me3, it has no demethylase activity toward H3K9me2, while it has high activity toward H3K27me2. Demethylates H3K9me2 in absence of H3K4me3. Has activity toward H4K20Me1 only when nucleosome is used as a substrate and when not histone octamer is used as substrate. The chain is Lysine-specific demethylase 7A (Kdm7a) from Mus musculus (Mouse).